We begin with the raw amino-acid sequence, 440 residues long: Glucose-1-phosphate adenylyltransferase (440 aa).

Alpha-D-glucose 1-phosphate contacts are provided by residues Tyr-125, Gly-190, 205 to 206 (EK), and Ser-223.

This sequence belongs to the bacterial/plant glucose-1-phosphate adenylyltransferase family. Homotetramer.

The enzyme catalyses alpha-D-glucose 1-phosphate + ATP + H(+) = ADP-alpha-D-glucose + diphosphate. Its pathway is glycan biosynthesis; glycogen biosynthesis. Functionally, involved in the biosynthesis of ADP-glucose, a building block required for the elongation reactions to produce glycogen. Catalyzes the reaction between ATP and alpha-D-glucose 1-phosphate (G1P) to produce pyrophosphate and ADP-Glc. The polypeptide is Glucose-1-phosphate adenylyltransferase (Dechloromonas aromatica (strain RCB)).